A 718-amino-acid polypeptide reads, in one-letter code: Protein Smaug homolog 1 (718 aa).

S168 carries the phosphoserine modification. A disordered region spans residues 278–310 (ARGPQCLPSDHAPLSPQSSVASSGSGGSEHLED). The SAM domain maps to 323–396 (SGMKDVPAWL…LKSLERDIIE (74 aa)). Disordered stretches follow at residues 417-474 (AYGS…LQPH) and 572-601 (NRGF…QYQI). S420 is subject to Phosphoserine. T424 carries the phosphothreonine modification. The segment covering 453–466 (GATATGATATPSAG) has biased composition (low complexity). R573 carries the post-translational modification Omega-N-methylarginine. S580 carries the phosphoserine modification.

It belongs to the SMAUG family.

It localises to the cytoplasm. The protein localises to the cell projection. The protein resides in the dendrite. It is found in the synapse. Its subcellular location is the synaptosome. Its function is as follows. Acts as a translational repressor of SRE-containing messengers. The chain is Protein Smaug homolog 1 (SAMD4A) from Macaca fascicularis (Crab-eating macaque).